A 239-amino-acid polypeptide reads, in one-letter code: 1-(5-phosphoribosyl)-5-[(5-phosphoribosylamino)methylideneamino] imidazole-4-carboxamide isomerase (239 aa).

D8 serves as the catalytic Proton acceptor. The Proton donor role is filled by D129.

It belongs to the HisA/HisF family.

It is found in the cytoplasm. It carries out the reaction 1-(5-phospho-beta-D-ribosyl)-5-[(5-phospho-beta-D-ribosylamino)methylideneamino]imidazole-4-carboxamide = 5-[(5-phospho-1-deoxy-D-ribulos-1-ylimino)methylamino]-1-(5-phospho-beta-D-ribosyl)imidazole-4-carboxamide. The protein operates within amino-acid biosynthesis; L-histidine biosynthesis; L-histidine from 5-phospho-alpha-D-ribose 1-diphosphate: step 4/9. The chain is 1-(5-phosphoribosyl)-5-[(5-phosphoribosylamino)methylideneamino] imidazole-4-carboxamide isomerase from Bacillus cereus (strain B4264).